Here is a 543-residue protein sequence, read N- to C-terminus: MTRYIFVTGGVVSSLGKGIASASLAAILEARGLKVTMLKLDPYINVDPGTMSPFQHGEVFVTHDGAETDLDLGHYERFIRTTMTQNNNFTTGRVYEHVLRKERRGDYLGATIQVIPHITDEIKRRIIKGAGDADVALVEIGGTVGDIESQPFLEAIRQLRFEVGARRAMLMHLTLVPYIATAGETKTKPTQHSVKELRSIGLQPDVLVCRSDHPIDISSRRKIAQFTNVEERAVIALEDADTIYKIPGILHSQGLDDFVVERFGLQCGGADLSEWDKVVDAKLNPEHEVTIAMVGKYMELLDAYKSLIEAMSHAGITNRTKVNLRYIDSEDIENQGTGLLEGVDAILVPGGFGLRGVEGKITAVQFARENKVPYLGICLGMQVAVIEFARNVLGWKDANSTEFDRTSAHAVVGLITEWEDATGAVETRTESSDLGGTMRLGAQDCQLEAGSLVHDCYRKDVIVERHRHRYEVNNNLLPQLIEAGLKISGRSGDGALVEVVEAPDHPWFVACQFHPEFTSTPRDGHPLFSGFVKAALAQHQKNS.

Positions 1 to 265 (MTRYIFVTGG…DDFVVERFGL (265 aa)) are amidoligase domain. Position 13 (Ser-13) interacts with CTP. Ser-13 provides a ligand contact to UTP. Residues 14-19 (SLGKGI) and Asp-71 each bind ATP. Positions 71 and 139 each coordinate Mg(2+). Residues 146-148 (DIE), 186-191 (KTKPTQ), and Lys-222 each bind CTP. Residues 186–191 (KTKPTQ) and Lys-222 each bind UTP. The region spanning 290–541 (TIAMVGKYME…VKAALAQHQK (252 aa)) is the Glutamine amidotransferase type-1 domain. Gly-351 is a binding site for L-glutamine. Cys-378 (nucleophile; for glutamine hydrolysis) is an active-site residue. Residues 379 to 382 (LGMQ), Glu-402, and Arg-469 each bind L-glutamine. Residues His-514 and Glu-516 contribute to the active site.

The protein belongs to the CTP synthase family. Homotetramer.

It carries out the reaction UTP + L-glutamine + ATP + H2O = CTP + L-glutamate + ADP + phosphate + 2 H(+). The catalysed reaction is L-glutamine + H2O = L-glutamate + NH4(+). The enzyme catalyses UTP + NH4(+) + ATP = CTP + ADP + phosphate + 2 H(+). It participates in pyrimidine metabolism; CTP biosynthesis via de novo pathway; CTP from UDP: step 2/2. With respect to regulation, allosterically activated by GTP, when glutamine is the substrate; GTP has no effect on the reaction when ammonia is the substrate. The allosteric effector GTP functions by stabilizing the protein conformation that binds the tetrahedral intermediate(s) formed during glutamine hydrolysis. Inhibited by the product CTP, via allosteric rather than competitive inhibition. In terms of biological role, catalyzes the ATP-dependent amination of UTP to CTP with either L-glutamine or ammonia as the source of nitrogen. Regulates intracellular CTP levels through interactions with the four ribonucleotide triphosphates. The sequence is that of CTP synthase from Pseudomonas syringae pv. tomato (strain ATCC BAA-871 / DC3000).